A 723-amino-acid polypeptide reads, in one-letter code: Polyribonucleotide nucleotidyltransferase (723 aa).

Residues Asp488 and Asp494 each coordinate Mg(2+). The region spanning 555–614 (PKIITLNIKPEKIKDVIGPGGKQINAIIEETGVKIDIEQDGTVYIASQDQAMNRKAIAII) is the KH domain. Positions 624–692 (GEVYTGKVRR…HQGRVNLSRK (69 aa)) constitute an S1 motif domain. Residues 692–723 (KALLEKKEQPEGDKKPQAEKKFYPKTKKPESK) are disordered. Positions 693-723 (ALLEKKEQPEGDKKPQAEKKFYPKTKKPESK) are enriched in basic and acidic residues.

It belongs to the polyribonucleotide nucleotidyltransferase family. Mg(2+) is required as a cofactor.

The protein localises to the cytoplasm. The catalysed reaction is RNA(n+1) + phosphate = RNA(n) + a ribonucleoside 5'-diphosphate. Its function is as follows. Involved in mRNA degradation. Catalyzes the phosphorolysis of single-stranded polyribonucleotides processively in the 3'- to 5'-direction. The polypeptide is Polyribonucleotide nucleotidyltransferase (Listeria welshimeri serovar 6b (strain ATCC 35897 / DSM 20650 / CCUG 15529 / CIP 8149 / NCTC 11857 / SLCC 5334 / V8)).